Consider the following 125-residue polypeptide: UPF0593 mitochondrial protein C806.05 (125 aa).

The protein belongs to the UPF0593 family.

It localises to the mitochondrion. The protein is UPF0593 mitochondrial protein C806.05 of Schizosaccharomyces pombe (strain 972 / ATCC 24843) (Fission yeast).